Consider the following 337-residue polypeptide: DNA-directed RNA polymerase subunit alpha (337 aa).

Positions 1–233 are alpha N-terminal domain (alpha-NTD); sequence MVREEVAVST…DLFIPFLHAE (233 aa). The tract at residues 266–337 is alpha C-terminal domain (alpha-CTD); that stretch reads GIALKCIFID…FTIDLPKNKF (72 aa).

It belongs to the RNA polymerase alpha chain family. As to quaternary structure, in plastids the minimal PEP RNA polymerase catalytic core is composed of four subunits: alpha, beta, beta', and beta''. When a (nuclear-encoded) sigma factor is associated with the core the holoenzyme is formed, which can initiate transcription.

It localises to the plastid. The protein resides in the chloroplast. It catalyses the reaction RNA(n) + a ribonucleoside 5'-triphosphate = RNA(n+1) + diphosphate. Its function is as follows. DNA-dependent RNA polymerase catalyzes the transcription of DNA into RNA using the four ribonucleoside triphosphates as substrates. This is DNA-directed RNA polymerase subunit alpha from Liriodendron tulipifera (Tuliptree).